The chain runs to 518 residues: 2-isopropylmalate synthase (518 aa).

The region spanning 4–266 (INFFDTTLRD…ESTIQLNEIK (263 aa)) is the Pyruvate carboxyltransferase domain. Positions 13, 201, 203, and 237 each coordinate Mn(2+). Residues 391–518 (DFISLQVHYG…GLSKQAAVGS (128 aa)) are regulatory domain.

This sequence belongs to the alpha-IPM synthase/homocitrate synthase family. LeuA type 1 subfamily. In terms of assembly, homodimer. Requires Mn(2+) as cofactor.

The protein resides in the cytoplasm. The enzyme catalyses 3-methyl-2-oxobutanoate + acetyl-CoA + H2O = (2S)-2-isopropylmalate + CoA + H(+). Its pathway is amino-acid biosynthesis; L-leucine biosynthesis; L-leucine from 3-methyl-2-oxobutanoate: step 1/4. Its function is as follows. Catalyzes the condensation of the acetyl group of acetyl-CoA with 3-methyl-2-oxobutanoate (2-ketoisovalerate) to form 3-carboxy-3-hydroxy-4-methylpentanoate (2-isopropylmalate). The chain is 2-isopropylmalate synthase from Bacillus licheniformis (strain ATCC 14580 / DSM 13 / JCM 2505 / CCUG 7422 / NBRC 12200 / NCIMB 9375 / NCTC 10341 / NRRL NRS-1264 / Gibson 46).